Consider the following 867-residue polypeptide: DNA mismatch repair protein MutS (867 aa).

609–616 (GPNMSGKS) contacts ATP.

It belongs to the DNA mismatch repair MutS family.

In terms of biological role, this protein is involved in the repair of mismatches in DNA. It is possible that it carries out the mismatch recognition step. This protein has a weak ATPase activity. This Latilactobacillus sakei subsp. sakei (strain 23K) (Lactobacillus sakei subsp. sakei) protein is DNA mismatch repair protein MutS.